Reading from the N-terminus, the 64-residue chain is U2-aranetoxin-Av1a (64 aa).

Expressed in fat body, but not in cephalothorax, silk gland, midgut.

Insecticidal toxin. This Araneus ventricosus (Orbweaver spider) protein is U2-aranetoxin-Av1a.